The primary structure comprises 363 residues: Peptide chain release factor 2 (363 aa).

Glutamine 251 bears the N5-methylglutamine mark.

This sequence belongs to the prokaryotic/mitochondrial release factor family. In terms of processing, methylated by PrmC. Methylation increases the termination efficiency of RF2.

Its subcellular location is the cytoplasm. Its function is as follows. Peptide chain release factor 2 directs the termination of translation in response to the peptide chain termination codons UGA and UAA. This Helicobacter pylori (strain G27) protein is Peptide chain release factor 2.